Consider the following 524-residue polypeptide: FAD-dependent monooxygenase opdD (524 aa).

FAD is bound by residues Glu-48 and Arg-145.

Belongs to the paxM FAD-dependent monooxygenase family.

Its pathway is secondary metabolite biosynthesis. Its function is as follows. FAD-dependent monooxygenase; part of the gene cluster that mediates the biosynthesis of oxopyrrolidines, polyketide-amino acid hybrid compounds with feature structures of tetramic acid. Does not seem to play a role in oxopyrrolidines A and B biosynthesis. May be involved in further modifications of these oxopyrrolidines. The sequence is that of FAD-dependent monooxygenase opdD from Penicillium oxalicum (strain 114-2 / CGMCC 5302) (Penicillium decumbens).